Here is a 129-residue protein sequence, read N- to C-terminus: Cytochrome c oxidase subunit 5B, mitochondrial (129 aa).

The transit peptide at 1 to 31 (MASRLLRGAGALAAQALRARGPSGAAAVRSM) directs the protein to the mitochondrion. Residues lysine 68 and lysine 86 each carry the N6-acetyllysine modification. Zn(2+)-binding residues include cysteine 91, cysteine 93, cysteine 113, and cysteine 116. N6-acetyllysine is present on lysine 121.

This sequence belongs to the cytochrome c oxidase subunit 5B family. In terms of assembly, component of the cytochrome c oxidase (complex IV, CIV), a multisubunit enzyme composed of 14 subunits. The complex is composed of a catalytic core of 3 subunits MT-CO1, MT-CO2 and MT-CO3, encoded in the mitochondrial DNA, and 11 supernumerary subunits COX4I, COX5A, COX5B, COX6A, COX6B, COX6C, COX7A, COX7B, COX7C, COX8 and NDUFA4, which are encoded in the nuclear genome. The complex exists as a monomer or a dimer and forms supercomplexes (SCs) in the inner mitochondrial membrane with NADH-ubiquinone oxidoreductase (complex I, CI) and ubiquinol-cytochrome c oxidoreductase (cytochrome b-c1 complex, complex III, CIII), resulting in different assemblies (supercomplex SCI(1)III(2)IV(1) and megacomplex MCI(2)III(2)IV(2)).

It localises to the mitochondrion inner membrane. The protein operates within energy metabolism; oxidative phosphorylation. Functionally, component of the cytochrome c oxidase, the last enzyme in the mitochondrial electron transport chain which drives oxidative phosphorylation. The respiratory chain contains 3 multisubunit complexes succinate dehydrogenase (complex II, CII), ubiquinol-cytochrome c oxidoreductase (cytochrome b-c1 complex, complex III, CIII) and cytochrome c oxidase (complex IV, CIV), that cooperate to transfer electrons derived from NADH and succinate to molecular oxygen, creating an electrochemical gradient over the inner membrane that drives transmembrane transport and the ATP synthase. Cytochrome c oxidase is the component of the respiratory chain that catalyzes the reduction of oxygen to water. Electrons originating from reduced cytochrome c in the intermembrane space (IMS) are transferred via the dinuclear copper A center (CU(A)) of subunit 2 and heme A of subunit 1 to the active site in subunit 1, a binuclear center (BNC) formed by heme A3 and copper B (CU(B)). The BNC reduces molecular oxygen to 2 water molecules using 4 electrons from cytochrome c in the IMS and 4 protons from the mitochondrial matrix. This chain is Cytochrome c oxidase subunit 5B, mitochondrial (COX5B), found in Pongo abelii (Sumatran orangutan).